We begin with the raw amino-acid sequence, 443 residues long: Thymidine phosphorylase (443 aa).

This sequence belongs to the thymidine/pyrimidine-nucleoside phosphorylase family. In terms of assembly, homodimer.

The enzyme catalyses thymidine + phosphate = 2-deoxy-alpha-D-ribose 1-phosphate + thymine. Its pathway is pyrimidine metabolism; dTMP biosynthesis via salvage pathway; dTMP from thymine: step 1/2. The enzymes which catalyze the reversible phosphorolysis of pyrimidine nucleosides are involved in the degradation of these compounds and in their utilization as carbon and energy sources, or in the rescue of pyrimidine bases for nucleotide synthesis. This Shewanella denitrificans (strain OS217 / ATCC BAA-1090 / DSM 15013) protein is Thymidine phosphorylase.